Here is a 188-residue protein sequence, read N- to C-terminus: Protein GrpE (188 aa).

Residues 1–30 (MTKKTSHHKAEQKEKRAGEESGRESEVLDH) form a disordered region. The segment covering 8 to 30 (HKAEQKEKRAGEESGRESEVLDH) has biased composition (basic and acidic residues).

The protein belongs to the GrpE family. Homodimer.

Its subcellular location is the cytoplasm. Functionally, participates actively in the response to hyperosmotic and heat shock by preventing the aggregation of stress-denatured proteins, in association with DnaK and GrpE. It is the nucleotide exchange factor for DnaK and may function as a thermosensor. Unfolded proteins bind initially to DnaJ; upon interaction with the DnaJ-bound protein, DnaK hydrolyzes its bound ATP, resulting in the formation of a stable complex. GrpE releases ADP from DnaK; ATP binding to DnaK triggers the release of the substrate protein, thus completing the reaction cycle. Several rounds of ATP-dependent interactions between DnaJ, DnaK and GrpE are required for fully efficient folding. The protein is Protein GrpE of Chlorobium phaeobacteroides (strain BS1).